The following is a 245-amino-acid chain: 1-(5-phosphoribosyl)-5-[(5-phosphoribosylamino)methylideneamino] imidazole-4-carboxamide isomerase (245 aa).

The active-site Proton acceptor is the D7. Catalysis depends on D129, which acts as the Proton donor.

It belongs to the HisA/HisF family.

It is found in the cytoplasm. The catalysed reaction is 1-(5-phospho-beta-D-ribosyl)-5-[(5-phospho-beta-D-ribosylamino)methylideneamino]imidazole-4-carboxamide = 5-[(5-phospho-1-deoxy-D-ribulos-1-ylimino)methylamino]-1-(5-phospho-beta-D-ribosyl)imidazole-4-carboxamide. The protein operates within amino-acid biosynthesis; L-histidine biosynthesis; L-histidine from 5-phospho-alpha-D-ribose 1-diphosphate: step 4/9. The polypeptide is 1-(5-phosphoribosyl)-5-[(5-phosphoribosylamino)methylideneamino] imidazole-4-carboxamide isomerase (Psychromonas ingrahamii (strain DSM 17664 / CCUG 51855 / 37)).